A 267-amino-acid chain; its full sequence is MADS-box transcription factor 15 (267 aa).

The 61-residue stretch at 1–61 folds into the MADS-box domain; it reads MGRGKVQLKR…GKLYEYATDS (61 aa). Residues 88–178 form the K-box domain; that stretch reads EGNWCHEYRK…QKELVERQKN (91 aa). The disordered stretch occupies residues 179–215; sequence VRGQQQVGQWDQTQVQAQAQAQPQAQTSSSSSSMLRD. Over residues 182 to 215 the composition is skewed to low complexity; that stretch reads QQQVGQWDQTQVQAQAQAQPQAQTSSSSSSMLRD.

May interact with the K-box of MADS1 and MADS6.

The protein localises to the nucleus. In terms of biological role, probable transcription factor. This Oryza sativa subsp. japonica (Rice) protein is MADS-box transcription factor 15 (MADS15).